The primary structure comprises 402 residues: Palmitoyltransferase PFA4 (402 aa).

Residues Met1 to Pro8 are Cytoplasmic-facing. Residues Ile9–Phe29 form a helical membrane-spanning segment. Residues Val30–Glu39 lie on the Lumenal side of the membrane. The helical transmembrane segment at Gln40 to Val60 threads the bilayer. At Asp61–Arg125 the chain is on the cytoplasmic side. The DHHC domain maps to Arg78 to Phe128. Residue Cys108 is the S-palmitoyl cysteine intermediate of the active site. Residues Phe126–Leu146 form a helical membrane-spanning segment. The Lumenal portion of the chain corresponds to His147–Cys165. Residues Ala166–Val186 traverse the membrane as a helical segment. Residues Arg187–Asn402 are Cytoplasmic-facing.

Belongs to the DHHC palmitoyltransferase family. PFA4 subfamily.

It is found in the endoplasmic reticulum membrane. It carries out the reaction L-cysteinyl-[protein] + hexadecanoyl-CoA = S-hexadecanoyl-L-cysteinyl-[protein] + CoA. Its function is as follows. Mediates the reversible addition of palmitate to target proteins, thereby regulating their membrane association and biological function. This Debaryomyces hansenii (strain ATCC 36239 / CBS 767 / BCRC 21394 / JCM 1990 / NBRC 0083 / IGC 2968) (Yeast) protein is Palmitoyltransferase PFA4.